The chain runs to 225 residues: MAKKEESVKLLGFWISPFSRRVEMALKLKGVPYEYLEEDLPKKSTLLLELNPVHKKVPVLVHNDKLLSESHVILEYIDQTWNNNPILPHDPYEKAMVRFWAKFVDEQILPVGFMPLVKAEKGIDVAIEEIREMLMFLEKEVTGKDFFGGKTIGFLDMVAGSMIPFCLARAWECLGIDMTPEDTFPELNRWIKNLNEVEIVRECIPPKEKHIERMKKIIERAKSTF.

Residues Glu6–Pro85 enclose the GST N-terminal domain. Residues Ser16–Pro17, Lys42–Lys43, Lys56–Val57, and Glu69–Ser70 each bind glutathione. The 128-residue stretch at Asp90–Ile217 folds into the GST C-terminal domain. Thr151 bears the Phosphothreonine mark.

Belongs to the GST superfamily. Tau family.

It is found in the cytoplasm. Its subcellular location is the cytosol. It catalyses the reaction RX + glutathione = an S-substituted glutathione + a halide anion + H(+). Functionally, may be involved in the conjugation of reduced glutathione to a wide number of exogenous and endogenous hydrophobic electrophiles and have a detoxification role against certain herbicides. In Arabidopsis thaliana (Mouse-ear cress), this protein is Glutathione S-transferase U2 (GSTU2).